The primary structure comprises 896 residues: Translation initiation factor IF-2 (896 aa).

Disordered stretches follow at residues histidine 53 to lysine 81 and alanine 117 to aspartate 301. Residues threonine 60–alanine 79 are compositionally biased toward polar residues. Over residues alanine 117–valine 227 the composition is skewed to basic and acidic residues. A compositionally biased stretch (low complexity) spans alanine 254–glycine 266. Positions glycine 273–asparagine 282 are enriched in basic and acidic residues. Over residues alanine 283–serine 294 the composition is skewed to low complexity. The region spanning serine 394–lysine 563 is the tr-type G domain. The tract at residues glycine 403 to threonine 410 is G1. Glycine 403–threonine 410 contacts GTP. The segment at glycine 428–histidine 432 is G2. The G3 stretch occupies residues aspartate 449 to glycine 452. Residues aspartate 449–histidine 453 and asparagine 503–aspartate 506 each bind GTP. The G4 stretch occupies residues asparagine 503–aspartate 506. The segment at serine 539–lysine 541 is G5.

This sequence belongs to the TRAFAC class translation factor GTPase superfamily. Classic translation factor GTPase family. IF-2 subfamily.

The protein localises to the cytoplasm. Functionally, one of the essential components for the initiation of protein synthesis. Protects formylmethionyl-tRNA from spontaneous hydrolysis and promotes its binding to the 30S ribosomal subunits. Also involved in the hydrolysis of GTP during the formation of the 70S ribosomal complex. The polypeptide is Translation initiation factor IF-2 (Shewanella sediminis (strain HAW-EB3)).